Reading from the N-terminus, the 114-residue chain is Putative toxin HigB3 (114 aa).

It belongs to the mycobacterial HigB family.

In terms of biological role, putative toxic component of a type II toxin-antitoxin (TA) system. Its cognate antitoxin would be HigA3. Not toxic upon expression in M.smegmatis. This is Putative toxin HigB3 from Mycobacterium tuberculosis (strain ATCC 25618 / H37Rv).